The primary structure comprises 97 residues: Small ribosomal subunit protein bS20 (97 aa).

Belongs to the bacterial ribosomal protein bS20 family.

Functionally, binds directly to 16S ribosomal RNA. The protein is Small ribosomal subunit protein bS20 of Prochlorococcus marinus (strain MIT 9515).